Consider the following 505-residue polypeptide: AMP phosphorylase (505 aa).

AMP contacts are provided by residues glycine 170, 196 to 201, and threonine 205; that span reads SRAITS. The active-site Proton donor is aspartate 258. AMP is bound by residues serine 266 and lysine 290.

This sequence belongs to the thymidine/pyrimidine-nucleoside phosphorylase family. Type 2 subfamily.

It catalyses the reaction AMP + phosphate = alpha-D-ribose 1,5-bisphosphate + adenine. The enzyme catalyses CMP + phosphate = cytosine + alpha-D-ribose 1,5-bisphosphate. It carries out the reaction UMP + phosphate = alpha-D-ribose 1,5-bisphosphate + uracil. In terms of biological role, catalyzes the conversion of AMP and phosphate to adenine and ribose 1,5-bisphosphate (R15P). Exhibits phosphorylase activity toward CMP and UMP in addition to AMP. Functions in an archaeal AMP degradation pathway, together with R15P isomerase and RubisCO. This chain is AMP phosphorylase, found in Methanococcus maripaludis (strain DSM 14266 / JCM 13030 / NBRC 101832 / S2 / LL).